We begin with the raw amino-acid sequence, 340 residues long: MTFFEQVRRLRSAATTLPRRLAIAAMGAVLVYGLVGTFGGPATAGAFSRPGLPVEYLQVPSASMGRDIKVQFQGGGPHAVYLLDGLRAQDDYNGWDINTPAFEEYYQSGLSVIMPVGGQSSFYTDWYQPSQSNGQNYTYKWETFLTREMPAWLQANKGVSPTGNAAVGLSMSGGSALILAAYYPQQFPYAASLSGFLNPSEGWWPTLIGLAMNDSGGYNANSMWGPSSDPAWKRNDPMVQIPRLVANNTRIWVYCGNGTPSDLGGDNIPAKFLEGLTLRTNQTFRDTYAADGGRNGVFNFPPNGTHSWPYWNEQLVAMKADIQHVLNGATPPAAPAAPAA.

Positions Met-1 to Gly-45 are cleaved as a signal peptide. Position 86–87 (Leu-86–Arg-87) interacts with substrate. The interval Phe-102–Val-112 is fibronectin-binding. 2 residues coordinate substrate: Ser-170 and Asn-198. The active-site Nucleophile is the Ser-170. Glu-274 is a catalytic residue. Substrate contacts are provided by residues Leu-276–Arg-279 and His-306–Trp-308. His-306 is an active-site residue.

This sequence belongs to the mycobacterial A85 antigen family. In terms of assembly, homodimer.

The protein resides in the secreted. It carries out the reaction an acyl-CoA + a 1,2-diacyl-sn-glycerol = a triacyl-sn-glycerol + CoA. It catalyses the reaction 2 alpha,alpha'-trehalose 6-mycolate = alpha,alpha'-trehalose 6,6'-bismycolate + alpha,alpha-trehalose. In terms of biological role, the antigen 85 proteins (FbpA, FbpB, FbpC) are responsible for the high affinity of mycobacteria to fibronectin, a large adhesive glycoprotein, which facilitates the attachment of M.tuberculosis to murine alveolar macrophages (AMs). They also help to maintain the integrity of the cell wall by catalyzing the transfer of mycolic acids to cell wall arabinogalactan and through the synthesis of alpha,alpha-trehalose dimycolate (TDM, cord factor). They catalyze the transfer of a mycoloyl residue from one molecule of alpha,alpha-trehalose monomycolate (TMM) to another TMM, leading to the formation of TDM. This Mycobacterium bovis (strain ATCC BAA-935 / AF2122/97) protein is Diacylglycerol acyltransferase/mycolyltransferase Ag85C (fbpC).